The sequence spans 644 residues: DNA mismatch repair protein MutL (644 aa).

Belongs to the DNA mismatch repair MutL/HexB family.

This protein is involved in the repair of mismatches in DNA. It is required for dam-dependent methyl-directed DNA mismatch repair. May act as a 'molecular matchmaker', a protein that promotes the formation of a stable complex between two or more DNA-binding proteins in an ATP-dependent manner without itself being part of a final effector complex. This chain is DNA mismatch repair protein MutL, found in Chlorobium chlorochromatii (strain CaD3).